A 306-amino-acid chain; its full sequence is Palmitoyl-protein thioesterase 1 (306 aa).

An N-terminal signal peptide occupies residues 1-27 (MASSSCLWLLALAFLLGSCASLALGHL). Intrachain disulfides connect Cys45–Cys46, Cys96–Cys128, and Cys152–Cys160. Ser115 is an active-site residue. N-linked (GlcNAc...) asparagine glycosylation is found at Asn197, Asn212, and Asn232. Catalysis depends on residues Asp233 and His289.

It belongs to the palmitoyl-protein thioesterase family. As to quaternary structure, interacts with CLN5, ATP5F1A and ATP5F1B. Post-translationally, glycosylated. Spleen, brain, seminal vesicle, and testis. Lower levels of activity in liver, heart, lung, and skeletal muscle.

Its subcellular location is the lysosome. It is found in the secreted. It localises to the golgi apparatus. The protein resides in the endoplasmic reticulum. It catalyses the reaction S-hexadecanoyl-L-cysteinyl-[protein] + H2O = L-cysteinyl-[protein] + hexadecanoate + H(+). It carries out the reaction hexadecanoyl-CoA + H2O = hexadecanoate + CoA + H(+). The enzyme catalyses S-hexadecanoyl-N-acetylcysteamine + H2O = N-acetylcysteamine + hexadecanoate + H(+). The catalysed reaction is S-hexadecanoyl-N-acetylcysteine methyl ester + H2O = N-acetylcysteine methyl ester + hexadecanoate + H(+). Palmitoylation reduces PPT1 enzymatic activity. Functionally, has thioesterase activity against fatty acid thioesters with 14 -18 carbons, including palmitoyl-CoA, S-palmitoyl-N-acetylcysteamine, and palmitoylated proteins. In contrast to PPT2, PPT1 can hydrolyze palmitoylated proteins and palmitoylcysteine. In Bos taurus (Bovine), this protein is Palmitoyl-protein thioesterase 1 (PPT1).